Consider the following 61-residue polypeptide: Bacteriocin leucocin-B (61 aa).

The propeptide occupies 1-24 (MNNMKSADNYQQLDNNALEQVVGG). The cysteines at positions 33 and 38 are disulfide-linked.

This sequence belongs to the bacteriocin class IIA/YGNGV family.

It is found in the secreted. Its function is as follows. Active against L.monocytogenes and several lactic acid bacteria. This chain is Bacteriocin leucocin-B, found in Leuconostoc carnosum.